We begin with the raw amino-acid sequence, 330 residues long: GDP-mannose transporter (330 aa).

The Cytoplasmic segment spans residues 1–13 (MSQLKVDNGPLSH). The helical transmembrane segment at 14–34 (VANSGPISIGAYCFSSIMMTV) threads the bilayer. The Lumenal portion of the chain corresponds to 35-48 (TNKFVVNLKGFNMN). Residues 49–69 (FVMLFVQAAVCVNLLFFLRLL) traverse the membrane as a helical segment. Over 70-81 (GYAKFRPLNRTD) the chain is Cytoplasmic. The helical transmembrane segment at 82–98 (AKNWFPITIFLVLMIYT) threads the bilayer. Over 99-104 (SSKSLQ) the chain is Lumenal. The helical transmembrane segment at 105-124 (YLAVPIYTIFKNLTIILIAY) threads the bilayer. The Cytoplasmic portion of the chain corresponds to 125-138 (GEVLFFGGSVTAME). Residues 139 to 155 (LSSFLLMVLSSVVATLG) traverse the membrane as a helical segment. Residues 156–170 (DQQALKKTADAGASL) are Lumenal-facing. A helical transmembrane segment spans residues 171–191 (FNIGYMWMFINCLSSAAFVLV). The Cytoplasmic portion of the chain corresponds to 192 to 203 (MRKRIKLTNFKD). Residues 204-224 (FDTMFYNNILSMPVLLALSFL) form a helical membrane-spanning segment. Residues 225-241 (MEDWSTENLTKNLSRDS) are Lumenal-facing. The chain crosses the membrane as a helical span at residues 242-262 (VTAMIISGMTAVCISYCSGWC). The Cytoplasmic segment spans residues 263-269 (VRVTSST). The helical transmembrane segment at 270–290 (TYSMVGALNKLPIALSGLIFF) threads the bilayer. The Lumenal portion of the chain corresponds to 291 to 294 (DAPK). Residues 295–315 (NFLSIFSIFLGFLSGIVYAVA) form a helical membrane-spanning segment. At 316–330 (KQKKQQNPQPSAPIK) the chain is on the cytoplasmic side.

The protein belongs to the TPT transporter family. SLC35D subfamily. Homooligomer.

It is found in the golgi apparatus membrane. It localises to the cytoplasmic vesicle membrane. Its subcellular location is the endoplasmic reticulum membrane. In terms of biological role, involved in the import of GDP-mannose from the cytoplasm into the Golgi lumen. This is GDP-mannose transporter (VRG4) from Kluyveromyces lactis (strain ATCC 8585 / CBS 2359 / DSM 70799 / NBRC 1267 / NRRL Y-1140 / WM37) (Yeast).